The sequence spans 176 residues: Inorganic pyrophosphatase (176 aa).

K30, R44, and Y56 together coordinate substrate. Mg(2+) contacts are provided by D66, D71, and D103. Y142 provides a ligand contact to substrate.

Belongs to the PPase family. Homohexamer. The cofactor is Mg(2+).

The protein resides in the cytoplasm. The enzyme catalyses diphosphate + H2O = 2 phosphate + H(+). In terms of biological role, catalyzes the hydrolysis of inorganic pyrophosphate (PPi) forming two phosphate ions. This chain is Inorganic pyrophosphatase, found in Vibrio parahaemolyticus serotype O3:K6 (strain RIMD 2210633).